The following is a 492-amino-acid chain: GTPase Obg (492 aa).

The Obg domain maps to proline 2–valine 159. The region spanning alanine 160–serine 340 is the OBG-type G domain. Residues glycine 166–serine 173, phenylalanine 191–valine 195, aspartate 212–glycine 215, asparagine 292–aspartate 295, and serine 321–valine 323 each bind GTP. Mg(2+) contacts are provided by serine 173 and threonine 193. In terms of domain architecture, OCT spans proline 358 to proline 438. Residues proline 441–threonine 492 are disordered. Basic and acidic residues-rich tracts occupy residues threonine 453–lysine 469 and arginine 476–threonine 492.

This sequence belongs to the TRAFAC class OBG-HflX-like GTPase superfamily. OBG GTPase family. In terms of assembly, monomer. The cofactor is Mg(2+).

It localises to the cytoplasm. Its function is as follows. An essential GTPase which binds GTP, GDP and possibly (p)ppGpp with moderate affinity, with high nucleotide exchange rates and a fairly low GTP hydrolysis rate. Plays a role in control of the cell cycle, stress response, ribosome biogenesis and in those bacteria that undergo differentiation, in morphogenesis control. This Mycolicibacterium paratuberculosis (strain ATCC BAA-968 / K-10) (Mycobacterium paratuberculosis) protein is GTPase Obg.